A 1291-amino-acid polypeptide reads, in one-letter code: Period circadian protein homolog 1 (1291 aa).

The tract at residues 1-134 (MSGPLEGADG…SSEQSARART (134 aa)) is disordered. The segment at 1–151 (MSGPLEGADG…LRELKLRLPP (151 aa)) is interaction with BTRC. Low complexity predominate over residues 48–115 (NSNGSSGNES…AYSLLSASSE (68 aa)). Residues 116 to 132 (QDNPSTSGCSSEQSARA) are compositionally biased toward polar residues. Thr121 carries the phosphothreonine; by CSNK1E modification. Residues Ser122 and Ser126 each carry the phosphoserine; by CSNK1E modification. A Nuclear export signal 1 motif is present at residues 138-147 (LMTALRELKL). PAS domains follow at residues 208–275 (ITSE…PSRL) and 348–414 (YEAP…KILQ). A PAC domain is found at 422-465 (HSPIRFCARNGEYVTMDTSWAGFVHPWSRKVAFVLGRHKVRTAP). A Nuclear export signal 2 motif is present at residues 489-498 (LSEQIHRLLL). 2 disordered regions span residues 508-544 (GLCG…PAPV) and 647-698 (TKRK…KEPV). 2 stretches are compositionally biased toward low complexity: residues 513-533 (GPLM…SNGG) and 652-662 (ASSSSYTASSA). A required for phosphorylation by CSNK1E region spans residues 596-815 (ELEVAPVPDQ…GLDTSSVAPS (220 aa)). A phosphoserine mark is found at Ser661, Ser663, and Ser704. 3 disordered regions span residues 749 to 772 (GLAP…TPDA), 809 to 873 (TSSV…PPAT), and 938 to 1037 (SQAP…ALSG). The span at 751–769 (APGPAPSPAPSPTVAPDPT) shows a compositional bias: pro residues. At Ser815 the chain carries Phosphoserine. The Nuclear localization signal signature appears at 824-840 (IPPGRRHHCRSKAKRSR). Over residues 827-846 (GRRHHCRSKAKRSRHHHHQT) the composition is skewed to basic residues. Pro residues-rich tracts occupy residues 859-873 (SPVP…PPAT) and 955-965 (PSLPPPPLSPP). A compositionally biased stretch (polar residues) spans 973–985 (FNSRCSSPLQLNL). Ser978 and Ser979 each carry phosphoserine. The Nuclear export signal 3 motif lies at 981-988 (LQLNLLQL). Residues 1042 to 1046 (LELLL) carry the LXXLL motif. The segment covering 1051–1061 (RSGTGSAASGS) has biased composition (low complexity). Disordered regions lie at residues 1051 to 1099 (RSGT…YFGS) and 1207 to 1291 (SVQD…NSTS). Gly residues predominate over residues 1062 to 1076 (LGSGLGSGSGSGSHE). Positions 1077 to 1094 (GGSTSASITRSSQSSHTS) are enriched in low complexity. Positions 1148 to 1291 (SRDAASVLKQ…ALPAEENSTS (144 aa)) are CRY binding domain. Positions 1235–1248 (GEGGGCGVGGGGGD) are enriched in gly residues. Polar residues predominate over residues 1253–1267 (AQTQIGAKGSSSQDS).

Homodimer. Component of the circadian core oscillator, which includes the CRY proteins, CLOCK or NPAS2, BMAL1 or BMAL2, CSNK1D and/or CSNK1E, TIMELESS, and the PER proteins. Interacts directly with TIMELESS. Interacts directly with PER2, PER3, CRY1 and CRY2. Interacts with BMAL1 and CLOCK. Interacts with GPRASP1. Interacts (phosphorylated) with BTRC and FBXW11; the interactions trigger proteasomal degradation. Interacts with NONO and SFPQ. Interacts with WDR5. Interacts with U2AF1L4 (Isoform 3). Interacts with USP2. Interacts with HNF4A. Post-translationally, phosphorylated on serine residues by CSNK1D, CSNK1E and probably also by CSNK1G2. Phosphorylation by CSNK1D or CSNK1E promotes nuclear location of PER proteins as well as ubiquitination and subsequent degradation. May be dephosphorylated by PP1. In terms of processing, ubiquitinated; requires phosphorylation by CSNK1E and interaction with BTRC and FBXW11. Deubiquitinated by USP2. In brain, highest expression is observed in the SCN. Highly expressed in the pyramidal cell layer of the piriform cortex, the periventricular part of the caudate-putamen, many thalamic nuclei, and the granular layer of the cerebellar cortex. Weaker expression is detected in most area of the brain, including cortical and non cortical structures. Expression but no oscillations occurs in the glomerular and mitral cell layers of the olfactory bulb, the internal granular layer of the cerebellum, the cornu ammonis and dentate gyrus of the hippocampus, the cerebral and piriform cortices. Expressed in the renal cortex (at protein level). Also found in heart, brain, bladder, lumbar spinal cord, spleen, lung, liver, skeletal muscle and testis.

It is found in the nucleus. Its subcellular location is the cytoplasm. Transcriptional repressor which forms a core component of the circadian clock. The circadian clock, an internal time-keeping system, regulates various physiological processes through the generation of approximately 24 hour circadian rhythms in gene expression, which are translated into rhythms in metabolism and behavior. It is derived from the Latin roots 'circa' (about) and 'diem' (day) and acts as an important regulator of a wide array of physiological functions including metabolism, sleep, body temperature, blood pressure, endocrine, immune, cardiovascular, and renal function. Consists of two major components: the central clock, residing in the suprachiasmatic nucleus (SCN) of the brain, and the peripheral clocks that are present in nearly every tissue and organ system. Both the central and peripheral clocks can be reset by environmental cues, also known as Zeitgebers (German for 'timegivers'). The predominant Zeitgeber for the central clock is light, which is sensed by retina and signals directly to the SCN. The central clock entrains the peripheral clocks through neuronal and hormonal signals, body temperature and feeding-related cues, aligning all clocks with the external light/dark cycle. Circadian rhythms allow an organism to achieve temporal homeostasis with its environment at the molecular level by regulating gene expression to create a peak of protein expression once every 24 hours to control when a particular physiological process is most active with respect to the solar day. Transcription and translation of core clock components (CLOCK, NPAS2, BMAL1, BMAL2, PER1, PER2, PER3, CRY1 and CRY2) plays a critical role in rhythm generation, whereas delays imposed by post-translational modifications (PTMs) are important for determining the period (tau) of the rhythms (tau refers to the period of a rhythm and is the length, in time, of one complete cycle). A diurnal rhythm is synchronized with the day/night cycle, while the ultradian and infradian rhythms have a period shorter and longer than 24 hours, respectively. Disruptions in the circadian rhythms contribute to the pathology of cardiovascular diseases, cancer, metabolic syndromes and aging. A transcription/translation feedback loop (TTFL) forms the core of the molecular circadian clock mechanism. Transcription factors, CLOCK or NPAS2 and BMAL1 or BMAL2, form the positive limb of the feedback loop, act in the form of a heterodimer and activate the transcription of core clock genes and clock-controlled genes (involved in key metabolic processes), harboring E-box elements (5'-CACGTG-3') within their promoters. The core clock genes: PER1/2/3 and CRY1/2 which are transcriptional repressors form the negative limb of the feedback loop and interact with the CLOCK|NPAS2-BMAL1|BMAL2 heterodimer inhibiting its activity and thereby negatively regulating their own expression. This heterodimer also activates nuclear receptors NR1D1/2 and RORA/B/G, which form a second feedback loop and which activate and repress BMAL1 transcription, respectively. Regulates circadian target genes expression at post-transcriptional levels, but may not be required for the repression at transcriptional level. Controls PER2 protein decay. Represses CRY2 preventing its repression on CLOCK/BMAL1 target genes such as FXYD5 and SCNN1A in kidney and PPARA in liver. Besides its involvement in the maintenance of the circadian clock, has an important function in the regulation of several processes. Participates in the repression of glucocorticoid receptor NR3C1/GR-induced transcriptional activity by reducing the association of NR3C1/GR to glucocorticoid response elements (GREs) by BMAL1:CLOCK. Plays a role in the modulation of the neuroinflammatory state via the regulation of inflammatory mediators release, such as CCL2 and IL6. In spinal astrocytes, negatively regulates the MAPK14/p38 and MAPK8/JNK MAPK cascades as well as the subsequent activation of NFkappaB. Coordinately regulates the expression of multiple genes that are involved in the regulation of renal sodium reabsorption. Can act as gene expression activator in a gene and tissue specific manner, in kidney enhances WNK1 and SLC12A3 expression in collaboration with CLOCK. Modulates hair follicle cycling. Represses the CLOCK-BMAL1 induced transcription of BHLHE40/DEC1. This chain is Period circadian protein homolog 1 (Per1), found in Mus musculus (Mouse).